A 294-amino-acid chain; its full sequence is MSDYLVKALAYDGMARVYAAVTTETIKEAQRRHDTWSVSSAALGRTMTGTLFLGAMQKEDQKITVKIEGDGPIGPIVADSNAQGQIRGYVTNPHVHFSELNEAGKLDVRRGVGTSGMLSVVKDLGFGENFTGQTPIVSGEIGEDFTYYLATSEQINSSVGVGVLVNPDDTIEAAGGFMLQLLPGATDEIIDEIEKNLTALPTVSRMIEAGETPESILAKLAGGEDKLQILEKIPVSFECNCSKERFGSAIISLGKEEIRSMIEEDHGAEAECHFCRNTYDFSEEELEKLYEEAK.

Disulfide bonds link cysteine 239–cysteine 241 and cysteine 272–cysteine 275.

It belongs to the HSP33 family. Post-translationally, under oxidizing conditions two disulfide bonds are formed involving the reactive cysteines. Under reducing conditions zinc is bound to the reactive cysteines and the protein is inactive.

The protein localises to the cytoplasm. In terms of biological role, redox regulated molecular chaperone. Protects both thermally unfolding and oxidatively damaged proteins from irreversible aggregation. Plays an important role in the bacterial defense system toward oxidative stress. This Listeria monocytogenes serotype 4a (strain HCC23) protein is 33 kDa chaperonin.